The chain runs to 554 residues: Hydroxylamine reductase (554 aa).

The [2Fe-2S] cluster site is built by Cys3, Cys6, Cys18, and Cys25. The hybrid [4Fe-2O-2S] cluster site is built by His252, Glu276, Cys320, Cys408, Cys436, Cys461, Glu495, and Lys497. Residue Cys408 is modified to Cysteine persulfide.

It belongs to the HCP family. The cofactor is [2Fe-2S] cluster. Requires hybrid [4Fe-2O-2S] cluster as cofactor.

Its subcellular location is the cytoplasm. It catalyses the reaction A + NH4(+) + H2O = hydroxylamine + AH2 + H(+). Catalyzes the reduction of hydroxylamine to form NH(3) and H(2)O. In Shewanella baltica (strain OS195), this protein is Hydroxylamine reductase.